Consider the following 340-residue polypeptide: L-threonine 3-dehydrogenase (340 aa).

Residue cysteine 38 participates in Zn(2+) binding. Active-site charge relay system residues include threonine 40 and histidine 43. Positions 63, 64, 93, 96, 99, and 107 each coordinate Zn(2+). NAD(+)-binding positions include isoleucine 175, aspartate 195, arginine 200, 261-263, and 285-286; these read LGI and IY.

Belongs to the zinc-containing alcohol dehydrogenase family. In terms of assembly, homotetramer. Zn(2+) is required as a cofactor.

The protein localises to the cytoplasm. It carries out the reaction L-threonine + NAD(+) = (2S)-2-amino-3-oxobutanoate + NADH + H(+). The protein operates within amino-acid degradation; L-threonine degradation via oxydo-reductase pathway; glycine from L-threonine: step 1/2. Catalyzes the NAD(+)-dependent oxidation of L-threonine to 2-amino-3-ketobutyrate. The polypeptide is L-threonine 3-dehydrogenase (Xanthomonas euvesicatoria pv. vesicatoria (strain 85-10) (Xanthomonas campestris pv. vesicatoria)).